The following is a 447-amino-acid chain: MAMAPVSQVPQPRRPHKWYQHLYVQVLIAMALSILLGYFAPDVAKSFGPLGDAFIKLVKMIIAPVIFLTVVTGIAGMRDMKTVGRVIGKAMIYFLCFSTLALVVGLVVVNIVQPGASMHADPAKLSSSLVQTYVQRAHDTSLIGFLLNIIPATPVSALASGDILQVLFFSVLFGIALASVGEAGTPLLKVLESLSASIFRLVAILMRAAPLGAFGAMAYTVGTFGIRSILNLAMLVGTFYITAILFVLIVLGSVARYNGFSILKLIRYIKEELLLVLGTSSSEPALPGLMAKMEAAGCEKTVVGLVIPTGYSFNLDGTNIYMTIAALFIAQALNIPLSWGDQALLLAVAMLSSKGAAGVTGAGFVTLAATLSVIPSIPVAGIGLIFGVDRFMSECRALTNLIGNAVAAIVVARWEGKLDKNQLTAALNGEFGPVEAGEDLAGHVTTS.

The next 10 helical transmembrane spans lie at H21–P41, L57–M77, I92–V112, S141–G161, I163–A183, L201–V221, L232–G252, I320–G340, L345–V365, and A368–V388.

This sequence belongs to the dicarboxylate/amino acid:cation symporter (DAACS) (TC 2.A.23) family.

It localises to the cell inner membrane. Its function is as follows. Responsible for the transport of dicarboxylates such as succinate, fumarate, and malate from the periplasm across the membrane. In Granulibacter bethesdensis (strain ATCC BAA-1260 / CGDNIH1), this protein is C4-dicarboxylate transport protein.